Reading from the N-terminus, the 407-residue chain is 12S rRNA N(4)-cytidine methyltransferase METTL15 (407 aa).

Positions 44–63 are disordered; that stretch reads EAQEETDQTGIQELHRSQDR. Residues 100–102, aspartate 119, phenylalanine 146, aspartate 169, and glutamine 176 each bind S-adenosyl-L-methionine; that span reads GGH. Position 358 is a phosphoserine (serine 358). The tract at residues 386-407 is disordered; it reads EDEDVQDNPRGRSAKLRAAIKL. Over residues 397 to 407 the composition is skewed to basic residues; it reads RSAKLRAAIKL.

This sequence belongs to the methyltransferase superfamily. RsmH family.

The protein resides in the mitochondrion matrix. It carries out the reaction cytidine(839) in 12S rRNA + S-adenosyl-L-methionine = N(4)-methylcytidine(839) in 12S rRNA + S-adenosyl-L-homocysteine + H(+). Functionally, N4-methylcytidine (m4C) methyltransferase responsible for the methylation of position C839 in mitochondrial 12S rRNA. Involved in the stabilization of 12S rRNA folding, therefore facilitating the assembly of the mitochondrial small ribosomal subunits. The protein is 12S rRNA N(4)-cytidine methyltransferase METTL15 (METTL15) of Bos taurus (Bovine).